Consider the following 234-residue polypeptide: Orotidine 5'-phosphate decarboxylase (234 aa).

Residues Asp-14, Lys-36, 63–72 (DLKFHDIPNT), Thr-123, Arg-184, Gln-193, Gly-213, and Arg-214 contribute to the substrate site. Residue Lys-65 is the Proton donor of the active site.

Belongs to the OMP decarboxylase family. Type 1 subfamily. In terms of assembly, homodimer.

The enzyme catalyses orotidine 5'-phosphate + H(+) = UMP + CO2. Its pathway is pyrimidine metabolism; UMP biosynthesis via de novo pathway; UMP from orotate: step 2/2. In terms of biological role, catalyzes the decarboxylation of orotidine 5'-monophosphate (OMP) to uridine 5'-monophosphate (UMP). This chain is Orotidine 5'-phosphate decarboxylase, found in Psychromonas ingrahamii (strain DSM 17664 / CCUG 51855 / 37).